The chain runs to 149 residues: Transcription antitermination protein NusB (149 aa).

This sequence belongs to the NusB family.

In terms of biological role, involved in transcription antitermination. Required for transcription of ribosomal RNA (rRNA) genes. Binds specifically to the boxA antiterminator sequence of the ribosomal RNA (rrn) operons. The protein is Transcription antitermination protein NusB of Chromobacterium violaceum (strain ATCC 12472 / DSM 30191 / JCM 1249 / CCUG 213 / NBRC 12614 / NCIMB 9131 / NCTC 9757 / MK).